Reading from the N-terminus, the 212-residue chain is Thymidylate kinase (212 aa).

7-14 is an ATP binding site; sequence GGEGCGKT.

Belongs to the thymidylate kinase family.

It carries out the reaction dTMP + ATP = dTDP + ADP. In terms of biological role, phosphorylation of dTMP to form dTDP in both de novo and salvage pathways of dTTP synthesis. This Gloeobacter violaceus (strain ATCC 29082 / PCC 7421) protein is Thymidylate kinase.